The following is a 344-amino-acid chain: Nicotinate-nucleotide--dimethylbenzimidazole phosphoribosyltransferase (344 aa).

The Proton acceptor role is filled by Glu-311.

Belongs to the CobT family.

It catalyses the reaction 5,6-dimethylbenzimidazole + nicotinate beta-D-ribonucleotide = alpha-ribazole 5'-phosphate + nicotinate + H(+). Its pathway is nucleoside biosynthesis; alpha-ribazole biosynthesis; alpha-ribazole from 5,6-dimethylbenzimidazole: step 1/2. Functionally, catalyzes the synthesis of alpha-ribazole-5'-phosphate from nicotinate mononucleotide (NAMN) and 5,6-dimethylbenzimidazole (DMB). In Aromatoleum aromaticum (strain DSM 19018 / LMG 30748 / EbN1) (Azoarcus sp. (strain EbN1)), this protein is Nicotinate-nucleotide--dimethylbenzimidazole phosphoribosyltransferase.